Consider the following 283-residue polypeptide: Pantothenate synthetase (283 aa).

26–33 (MGNLHEGH) is an ATP binding site. The active-site Proton donor is histidine 33. Residue glutamine 57 participates in (R)-pantoate binding. Glutamine 57 is a binding site for beta-alanine. 144-147 (GKKD) serves as a coordination point for ATP. Residue glutamine 150 coordinates (R)-pantoate. ATP contacts are provided by residues valine 173 and 181 to 184 (LSSR).

This sequence belongs to the pantothenate synthetase family. As to quaternary structure, homodimer.

It localises to the cytoplasm. It carries out the reaction (R)-pantoate + beta-alanine + ATP = (R)-pantothenate + AMP + diphosphate + H(+). The protein operates within cofactor biosynthesis; (R)-pantothenate biosynthesis; (R)-pantothenate from (R)-pantoate and beta-alanine: step 1/1. In terms of biological role, catalyzes the condensation of pantoate with beta-alanine in an ATP-dependent reaction via a pantoyl-adenylate intermediate. This is Pantothenate synthetase from Ralstonia pickettii (strain 12J).